The following is a 336-amino-acid chain: UDP-glucose 4-epimerase (336 aa).

NAD(+) contacts are provided by residues 11-12 (YI), 31-36 (DNLINS), 58-59 (DI), 80-84 (FAGLK), N99, S124, Y149, K153, and F178. Substrate-binding residues include S124 and Y149. The active-site Proton acceptor is Y149. Substrate contacts are provided by residues N179, 199–200 (NL), 216–218 (LVY), R231, and 290–293 (RPGD).

Belongs to the NAD(P)-dependent epimerase/dehydratase family. In terms of assembly, homodimer. It depends on NAD(+) as a cofactor.

The catalysed reaction is UDP-alpha-D-glucose = UDP-alpha-D-galactose. It participates in carbohydrate metabolism; galactose metabolism. Functionally, involved in the metabolism of galactose. Catalyzes the conversion of UDP-galactose (UDP-Gal) to UDP-glucose (UDP-Glc) through a mechanism involving the transient reduction of NAD. In Yersinia enterocolitica, this protein is UDP-glucose 4-epimerase (galE).